A 174-amino-acid chain; its full sequence is Large ribosomal subunit protein uL10 (174 aa).

The protein belongs to the universal ribosomal protein uL10 family. Part of the ribosomal stalk of the 50S ribosomal subunit. The N-terminus interacts with L11 and the large rRNA to form the base of the stalk. The C-terminus forms an elongated spine to which L12 dimers bind in a sequential fashion forming a multimeric L10(L12)X complex.

Forms part of the ribosomal stalk, playing a central role in the interaction of the ribosome with GTP-bound translation factors. This Pelobacter propionicus (strain DSM 2379 / NBRC 103807 / OttBd1) protein is Large ribosomal subunit protein uL10.